The following is a 107-amino-acid chain: Phosphoribosyl-ATP pyrophosphatase (107 aa).

The protein belongs to the PRA-PH family.

It localises to the cytoplasm. It catalyses the reaction 1-(5-phospho-beta-D-ribosyl)-ATP + H2O = 1-(5-phospho-beta-D-ribosyl)-5'-AMP + diphosphate + H(+). It participates in amino-acid biosynthesis; L-histidine biosynthesis; L-histidine from 5-phospho-alpha-D-ribose 1-diphosphate: step 2/9. This is Phosphoribosyl-ATP pyrophosphatase from Methylobacterium nodulans (strain LMG 21967 / CNCM I-2342 / ORS 2060).